We begin with the raw amino-acid sequence, 141 residues long: MPPHVDDVMKLCCELSANQQVKTAVKQSGKGAAAAGGLAFAGGLIGGPLGIAVGGAVGGLLGCWMKSGQFKPLPQVIMELTPDQQARLYEDIVAILGSITWTDVAQLTALVMGNASLQQQVTAALLSYIHKELQAEVHYID.

The helical transmembrane segment at 37–57 (GLAFAGGLIGGPLGIAVGGAV) threads the bilayer.

This sequence belongs to the C19orf12 family.

The protein localises to the mitochondrion. It is found in the mitochondrion membrane. The protein resides in the endoplasmic reticulum. Its subcellular location is the cytoplasm. It localises to the cytosol. In Danio rerio (Zebrafish), this protein is Protein C19orf12 homolog.